The primary structure comprises 320 residues: Acetaldehyde dehydrogenase 2 (320 aa).

The active-site Acyl-thioester intermediate is cysteine 129. Residues 160–168 and asparagine 287 each bind NAD(+); that span reads SAGPGTRAN.

The protein belongs to the acetaldehyde dehydrogenase family.

The enzyme catalyses acetaldehyde + NAD(+) + CoA = acetyl-CoA + NADH + H(+). The protein is Acetaldehyde dehydrogenase 2 of Burkholderia cenocepacia (strain ATCC BAA-245 / DSM 16553 / LMG 16656 / NCTC 13227 / J2315 / CF5610) (Burkholderia cepacia (strain J2315)).